The sequence spans 302 residues: Bifunctional protein FolD (302 aa).

NADP(+) contacts are provided by residues 165–167 (GRS), Ser-190, and Ile-231.

The protein belongs to the tetrahydrofolate dehydrogenase/cyclohydrolase family. Homodimer.

It catalyses the reaction (6R)-5,10-methylene-5,6,7,8-tetrahydrofolate + NADP(+) = (6R)-5,10-methenyltetrahydrofolate + NADPH. It carries out the reaction (6R)-5,10-methenyltetrahydrofolate + H2O = (6R)-10-formyltetrahydrofolate + H(+). It participates in one-carbon metabolism; tetrahydrofolate interconversion. Catalyzes the oxidation of 5,10-methylenetetrahydrofolate to 5,10-methenyltetrahydrofolate and then the hydrolysis of 5,10-methenyltetrahydrofolate to 10-formyltetrahydrofolate. The protein is Bifunctional protein FolD of Prochlorococcus marinus (strain MIT 9211).